Consider the following 465-residue polypeptide: Cruciform DNA-recognizing protein 1 (465 aa).

Disordered stretches follow at residues Glu107–Pro227 and Arg247–Gln276. Positions Asn127 to Lys151 are enriched in basic residues. A phosphoserine mark is found at Ser153 and Ser156. Acidic residues predominate over residues Ser156–Gly165. The segment at Asn160 to Glu161 is X-DNA-binding. A compositionally biased stretch (low complexity) spans Val166–Thr177. Thr182 bears the Phosphothreonine mark. Ser271 carries the post-translational modification Phosphoserine. Thr295 carries the phosphothreonine modification. Positions Ala300 to Lys465 are disordered. Ser319 and Ser343 each carry phosphoserine. The segment covering Leu337–Glu363 has biased composition (basic and acidic residues). The residue at position 366 (Thr366) is a Phosphothreonine. 2 stretches are compositionally biased toward basic and acidic residues: residues Ala385–Glu398 and Glu404–Lys428. Ser394 carries the post-translational modification Phosphoserine. The residue at position 440 (Ser440) is a Phosphoserine. The segment covering Lys451–Lys465 has biased composition (basic residues).

The protein belongs to the CRP1/MDG1 family. In terms of processing, cleaved in the vicinity of position 160 to give an X-DNA-binding N-terminal subpeptide and a non-DNA-binding C-terminal subpeptide.

Cruciform DNA-binding protein which exerts an enhancing effect on the cleavage of cruciform DNA (X-DNA) by endonuclease VII from bacteriophage T4. The polypeptide is Cruciform DNA-recognizing protein 1 (CRP1) (Saccharomyces cerevisiae (strain ATCC 204508 / S288c) (Baker's yeast)).